Consider the following 831-residue polypeptide: Periplasmic nitrate reductase (831 aa).

The tat-type signal signal peptide spans 1 to 29 (MKVSRRDFIKQTAIAATASVAGIPLGTEA). A 4Fe-4S Mo/W bis-MGD-type domain is found at 41–97 (LKWSKAPCRFCGTGCGVTVAVRDNKVVATQGDPQCEVNKGLNCVKGYFLSKIMYGQD). Residues C48, C51, C55, and C83 each contribute to the [4Fe-4S] cluster site. Residues K85, Q152, N177, C181, 214-221 (WGSNMAEM), 245-249 (STFTH), 264-266 (QTD), M375, Q379, N485, 511-512 (SD), K534, D561, and 721-730 (TGRVLEHWHS) each bind Mo-bis(molybdopterin guanine dinucleotide). W797 serves as a coordination point for substrate. Residues N805 and K822 each contribute to the Mo-bis(molybdopterin guanine dinucleotide) site.

The protein belongs to the prokaryotic molybdopterin-containing oxidoreductase family. NasA/NapA/NarB subfamily. As to quaternary structure, component of the periplasmic nitrate reductase NapAB complex composed of NapA and NapB. Requires [4Fe-4S] cluster as cofactor. The cofactor is Mo-bis(molybdopterin guanine dinucleotide). Predicted to be exported by the Tat system. The position of the signal peptide cleavage has not been experimentally proven.

The protein localises to the periplasm. It catalyses the reaction 2 Fe(II)-[cytochrome] + nitrate + 2 H(+) = 2 Fe(III)-[cytochrome] + nitrite + H2O. In terms of biological role, catalytic subunit of the periplasmic nitrate reductase complex NapAB. Receives electrons from NapB and catalyzes the reduction of nitrate to nitrite. This chain is Periplasmic nitrate reductase, found in Cupriavidus pinatubonensis (strain JMP 134 / LMG 1197) (Cupriavidus necator (strain JMP 134)).